The primary structure comprises 616 residues: Proline--tRNA ligase (616 aa).

This sequence belongs to the class-II aminoacyl-tRNA synthetase family. ProS type 1 subfamily. In terms of assembly, homodimer.

The protein resides in the cytoplasm. The enzyme catalyses tRNA(Pro) + L-proline + ATP = L-prolyl-tRNA(Pro) + AMP + diphosphate. Catalyzes the attachment of proline to tRNA(Pro) in a two-step reaction: proline is first activated by ATP to form Pro-AMP and then transferred to the acceptor end of tRNA(Pro). As ProRS can inadvertently accommodate and process non-cognate amino acids such as alanine and cysteine, to avoid such errors it has two additional distinct editing activities against alanine. One activity is designated as 'pretransfer' editing and involves the tRNA(Pro)-independent hydrolysis of activated Ala-AMP. The other activity is designated 'posttransfer' editing and involves deacylation of mischarged Ala-tRNA(Pro). The misacylated Cys-tRNA(Pro) is not edited by ProRS. The polypeptide is Proline--tRNA ligase (Lactococcus lactis subsp. cremoris (strain MG1363)).